We begin with the raw amino-acid sequence, 175 residues long: Adenine phosphoribosyltransferase (175 aa).

Belongs to the purine/pyrimidine phosphoribosyltransferase family. As to quaternary structure, homodimer.

The protein resides in the cytoplasm. The enzyme catalyses AMP + diphosphate = 5-phospho-alpha-D-ribose 1-diphosphate + adenine. It functions in the pathway purine metabolism; AMP biosynthesis via salvage pathway; AMP from adenine: step 1/1. Functionally, catalyzes a salvage reaction resulting in the formation of AMP, that is energically less costly than de novo synthesis. The polypeptide is Adenine phosphoribosyltransferase (Lactobacillus acidophilus (strain ATCC 700396 / NCK56 / N2 / NCFM)).